The chain runs to 561 residues: Lengsin (561 aa).

Disordered stretches follow at residues 1-78 and 91-112; these read MNDE…WHNA and SLPSAGAPDAEFNPNTDHTRDN. A compositionally biased stretch (basic residues) spans 26 to 37; sequence NKLKRTRRKVTK. Residues 50–63 are compositionally biased toward polar residues; it reads MANSREMSRNQTAD. The GS beta-grasp domain maps to 135 to 229; sequence NHLQFVRFEA…VICDTFTVTG (95 aa). The 326-residue stretch at 236–561 folds into the GS catalytic domain; the sequence is PRYIAKRQLR…EGNKFLEYFI (326 aa).

The protein belongs to the glutamine synthetase family. In terms of assembly, dodecamer. Interacts with BFSP2 and VIM. As to expression, expressed in lens.

In terms of biological role, may act as a component of the cytoskeleton or as a chaperone for the reorganization of intermediate filament proteins during terminal differentiation in the lens. Does not seem to have enzymatic activity. This Rattus norvegicus (Rat) protein is Lengsin (Lgsn).